A 199-amino-acid polypeptide reads, in one-letter code: Prostatic spermine-binding protein (199 aa).

Residues 1-18 (MLLLLTLAFLASPTCRAQ) form the signal peptide. The region spanning 19-151 (NVLGNAAGKY…VRGIGFKWGN (133 aa)) is the Jacalin-type lectin domain. N-linked (GlcNAc...) asparagine glycosylation occurs at Asn-62. Residues 159–199 (HYNNKEDKADNKDADNKDADNKDDGDEDDDGNDDDDQKDES) are disordered. Basic and acidic residues predominate over residues 160-180 (YNNKEDKADNKDADNKDADNK). Residues 181–199 (DDGDEDDDGNDDDDQKDES) show a composition bias toward acidic residues.

The protein to rat SBP. In terms of tissue distribution, prostate.

Functionally, this protein seems to be functional equivalent to rat prostatic spermine-binding protein, which is involved in polyamine binding. The sequence is that of Prostatic spermine-binding protein (Sbp) from Mus musculus (Mouse).